The primary structure comprises 530 residues: Inactive ubiquitin carboxyl-terminal hydrolase 17-like protein 8 (530 aa).

One can recognise a USP domain in the interval 80–375; that stretch reads AGLQNMGNTC…QAYVLFYIQK (296 aa). A compositionally biased stretch (basic and acidic residues) spans 382 to 392; sequence SESVSRGREPR. Disordered stretches follow at residues 382–412 and 493–530; these read SESVSRGREPRALGAEDTDRPATQGELKRDH and NSTDQESMNTGTLASLQGRTRRSKGKNKHSKRSLLVCQ. The span at 495–510 shows a compositional bias: polar residues; the sequence is TDQESMNTGTLASLQG. A compositionally biased stretch (basic residues) spans 511–524; the sequence is RTRRSKGKNKHSKR.

It belongs to the peptidase C19 family. USP17 subfamily.

The protein resides in the nucleus. It localises to the endoplasmic reticulum. The sequence is that of Inactive ubiquitin carboxyl-terminal hydrolase 17-like protein 8 (USP17L8) from Homo sapiens (Human).